The chain runs to 290 residues: D-tagatose-1,6-bisphosphate aldolase subunit KbaY (290 aa).

Asp-82 (proton donor) is an active-site residue. The Zn(2+) site is built by His-83 and His-180. Gly-181 lines the dihydroxyacetone phosphate pocket. His-208 is a Zn(2+) binding site. Dihydroxyacetone phosphate contacts are provided by residues 209 to 211 (GAS) and 230 to 233 (NVAT).

Belongs to the class II fructose-bisphosphate aldolase family. TagBP aldolase KbaY subfamily. Homotetramer. Forms a complex with KbaZ. Requires Zn(2+) as cofactor.

The enzyme catalyses D-tagatofuranose 1,6-bisphosphate = D-glyceraldehyde 3-phosphate + dihydroxyacetone phosphate. The protein operates within carbohydrate metabolism; D-tagatose 6-phosphate degradation; D-glyceraldehyde 3-phosphate and glycerone phosphate from D-tagatose 6-phosphate: step 2/2. In terms of biological role, catalytic subunit of the tagatose-1,6-bisphosphate aldolase KbaYZ, which catalyzes the reversible aldol condensation of dihydroxyacetone phosphate (DHAP or glycerone-phosphate) with glyceraldehyde 3-phosphate (G3P) to produce tagatose 1,6-bisphosphate (TBP). Requires KbaZ subunit for full activity and stability. This Citrobacter koseri (strain ATCC BAA-895 / CDC 4225-83 / SGSC4696) protein is D-tagatose-1,6-bisphosphate aldolase subunit KbaY.